Consider the following 142-residue polypeptide: Large ribosomal subunit protein uL11 (142 aa).

This sequence belongs to the universal ribosomal protein uL11 family. In terms of assembly, part of the ribosomal stalk of the 50S ribosomal subunit. Interacts with L10 and the large rRNA to form the base of the stalk. L10 forms an elongated spine to which L12 dimers bind in a sequential fashion forming a multimeric L10(L12)X complex. In terms of processing, one or more lysine residues are methylated.

Its function is as follows. Forms part of the ribosomal stalk which helps the ribosome interact with GTP-bound translation factors. In Dichelobacter nodosus (strain VCS1703A), this protein is Large ribosomal subunit protein uL11.